A 440-amino-acid chain; its full sequence is Glutamyl-tRNA reductase (440 aa).

Residues 50–53 (TCNR), Ser-109, 114–116 (EPQ), and Gln-120 contribute to the substrate site. The Nucleophile role is filled by Cys-51. Residue 189-194 (GAGEMA) participates in NADP(+) binding.

It belongs to the glutamyl-tRNA reductase family. In terms of assembly, homodimer.

The enzyme catalyses (S)-4-amino-5-oxopentanoate + tRNA(Glu) + NADP(+) = L-glutamyl-tRNA(Glu) + NADPH + H(+). The protein operates within porphyrin-containing compound metabolism; protoporphyrin-IX biosynthesis; 5-aminolevulinate from L-glutamyl-tRNA(Glu): step 1/2. Its function is as follows. Catalyzes the NADPH-dependent reduction of glutamyl-tRNA(Glu) to glutamate 1-semialdehyde (GSA). In Nitratidesulfovibrio vulgaris (strain ATCC 29579 / DSM 644 / CCUG 34227 / NCIMB 8303 / VKM B-1760 / Hildenborough) (Desulfovibrio vulgaris), this protein is Glutamyl-tRNA reductase.